Consider the following 875-residue polypeptide: Neurotrypsin (875 aa).

Positions 1-20 are cleaved as a signal peptide; sequence MTLARFVLALVLGALPEVVG. N-linked (GlcNAc...) asparagine glycosylation is present at N26. The segment at 29–68 is disordered; it reads LHHRHRHSPPPGPQYPYYLPTHQRPPRTRPPPPLPRFSRP. One can recognise a Kringle domain in the interval 93–165; it reads CPPGEPWVSV…GKVDWGYCDC (73 aa). Cystine bridges form between C93/C165, C109/C149, C138/C163, C195/C259, C208/C269, C239/C249, C305/C369, C318/C379, C349/C359, C412/C475, C425/C485, C455/C465, C525/C589, C538/C599, C569/C579, C619/C750, C661/C677, C765/C831, C794/C808, and C821/C850. SRCR domains lie at 170–271, 280–381, 387–487, and 500–601; these read VRLR…TCSF, IRLV…SCTP, IRLA…ACYP, and VRLM…ICDY. The tract at residues 619–630 is zymogen activation region; that stretch reads CGLRLLHRRQKR. In terms of domain architecture, Peptidase S1 spans 631 to 874; it reads IIGGKNSLRG…FVPWIKSVTK (244 aa). H676 (charge relay system) is an active-site residue. Residue N683 is glycosylated (N-linked (GlcNAc...) asparagine). Catalysis depends on D726, which acts as the Charge relay system. S825 (charge relay system) is an active-site residue.

It belongs to the peptidase S1 family.

The protein resides in the secreted. Functionally, plays a role in neuronal plasticity and the proteolytic action may subserve structural reorganizations associated with learning and memory operations. The polypeptide is Neurotrypsin (PRSS12) (Trachypithecus phayrei (Phayre's leaf monkey)).